We begin with the raw amino-acid sequence, 439 residues long: Serine/threonine-protein kinase 2 (439 aa).

A Protein kinase domain is found at 87–439 (NDDFYHISTG…IFSDWINGGN (353 aa)). ATP-binding positions include 93–101 (ISTGGYGIV) and K117. D307 serves as the catalytic Proton acceptor.

It belongs to the protein kinase superfamily. Ser/Thr protein kinase family. Poxviruses subfamily. In terms of processing, phosphorylated in vivo. Autophosphorylated in vitro.

It localises to the host endoplasmic reticulum. Its subcellular location is the host endoplasmic reticulum-Golgi intermediate compartment. It carries out the reaction L-seryl-[protein] + ATP = O-phospho-L-seryl-[protein] + ADP + H(+). The enzyme catalyses L-threonyl-[protein] + ATP = O-phospho-L-threonyl-[protein] + ADP + H(+). In terms of biological role, essential serine-protein kinase involved in the early stage of virion morphogenesis. This Vaccinia virus (strain Ankara) (VACV) protein is Serine/threonine-protein kinase 2 (OPG054).